The sequence spans 474 residues: PRAME family member 14 (474 aa).

5 LRR repeats span residues 15-38, 204-229, 271-294, 319-342, and 391-414; these read QSLL…LYLP, LNSI…CYLK, LLKI…LQNP, LGYL…PLGA, and MGAL…TYPA.

This sequence belongs to the PRAME family.

The sequence is that of PRAME family member 14 from Homo sapiens (Human).